A 522-amino-acid polypeptide reads, in one-letter code: Wax ester synthase/diacylglycerol acyltransferase 4 (522 aa).

Basic and acidic residues predominate over residues 1–12; it reads MEIETRPHISGD. The segment at 1 to 20 is disordered; that stretch reads MEIETRPHISGDEKEEEQPL. At 1–205 the chain is on the cytoplasmic side; the sequence is MEIETRPHIS…SDSRLLWLVK (205 aa). Histidine 149 (proton acceptor) is an active-site residue. A helical transmembrane segment spans residues 206-226; that stretch reads VIWTAVILGLNTVCDALEFIV. Residues 227–522 lie on the Lumenal side of the membrane; the sequence is TTLFVKDTET…QIAGLLYRML (296 aa). Asparagine 270 and asparagine 409 each carry an N-linked (GlcNAc...) asparagine glycan.

In the N-terminal section; belongs to the long-chain O-acyltransferase family. Mostly expressed in roots, flowers and siliques.

It localises to the cell membrane. It is found in the endoplasmic reticulum membrane. The enzyme catalyses an acyl-CoA + a 1,2-diacyl-sn-glycerol = a triacyl-sn-glycerol + CoA. It carries out the reaction a long chain fatty alcohol + a fatty acyl-CoA = a wax ester + CoA. It functions in the pathway glycerolipid metabolism; triacylglycerol biosynthesis. It participates in lipid metabolism. Bifunctional wax ester synthase/diacylglycerol acyltransferase. Involved in cuticular wax biosynthesis. This chain is Wax ester synthase/diacylglycerol acyltransferase 4, found in Arabidopsis thaliana (Mouse-ear cress).